Consider the following 965-residue polypeptide: Valine--tRNA ligase (965 aa).

The segment covering 1–12 has biased composition (polar residues); it reads MEKTPATQTQAE. Residues 1–23 are disordered; the sequence is MEKTPATQTQAEPSLDKTYNPKE. Residues 56–66 carry the 'HIGH' region motif; that stretch reads PNVTGSLHMGH. Residues 568–572 carry the 'KMSKS' region motif; the sequence is KMSKS. K571 is an ATP binding site. Positions 893–960 form a coiled coil; sequence MAGLVDKEAE…SKEKLLAQKE (68 aa).

The protein belongs to the class-I aminoacyl-tRNA synthetase family. ValS type 1 subfamily. Monomer.

Its subcellular location is the cytoplasm. It catalyses the reaction tRNA(Val) + L-valine + ATP = L-valyl-tRNA(Val) + AMP + diphosphate. In terms of biological role, catalyzes the attachment of valine to tRNA(Val). As ValRS can inadvertently accommodate and process structurally similar amino acids such as threonine, to avoid such errors, it has a 'posttransfer' editing activity that hydrolyzes mischarged Thr-tRNA(Val) in a tRNA-dependent manner. The sequence is that of Valine--tRNA ligase from Photorhabdus laumondii subsp. laumondii (strain DSM 15139 / CIP 105565 / TT01) (Photorhabdus luminescens subsp. laumondii).